Reading from the N-terminus, the 279-residue chain is Acetylglutamate kinase (279 aa).

Residues 62-63 (GG), Arg-84, and Asn-177 each bind substrate.

It belongs to the acetylglutamate kinase family. ArgB subfamily.

The protein resides in the cytoplasm. The catalysed reaction is N-acetyl-L-glutamate + ATP = N-acetyl-L-glutamyl 5-phosphate + ADP. Its pathway is amino-acid biosynthesis; L-arginine biosynthesis; N(2)-acetyl-L-ornithine from L-glutamate: step 2/4. In terms of biological role, catalyzes the ATP-dependent phosphorylation of N-acetyl-L-glutamate. The protein is Acetylglutamate kinase of Pseudothermotoga lettingae (strain ATCC BAA-301 / DSM 14385 / NBRC 107922 / TMO) (Thermotoga lettingae).